A 276-amino-acid polypeptide reads, in one-letter code: Dermonecrotic toxin LlSicTox-alphaIV3 (276 aa).

Residue H5 is part of the active site. 2 residues coordinate Mg(2+): E25 and D27. H41 serves as the catalytic Nucleophile. 2 disulfides stabilise this stretch: C45/C51 and C47/C192. D85 is a Mg(2+) binding site.

It belongs to the arthropod phospholipase D family. Class II subfamily. Requires Mg(2+) as cofactor. Expressed by the venom gland.

The protein resides in the secreted. The enzyme catalyses an N-(acyl)-sphingosylphosphocholine = an N-(acyl)-sphingosyl-1,3-cyclic phosphate + choline. It carries out the reaction an N-(acyl)-sphingosylphosphoethanolamine = an N-(acyl)-sphingosyl-1,3-cyclic phosphate + ethanolamine. The catalysed reaction is a 1-acyl-sn-glycero-3-phosphocholine = a 1-acyl-sn-glycero-2,3-cyclic phosphate + choline. It catalyses the reaction a 1-acyl-sn-glycero-3-phosphoethanolamine = a 1-acyl-sn-glycero-2,3-cyclic phosphate + ethanolamine. Functionally, dermonecrotic toxins cleave the phosphodiester linkage between the phosphate and headgroup of certain phospholipids (sphingolipid and lysolipid substrates), forming an alcohol (often choline) and a cyclic phosphate. This toxin acts on sphingomyelin (SM). It may also act on ceramide phosphoethanolamine (CPE), lysophosphatidylcholine (LPC) and lysophosphatidylethanolamine (LPE), but not on lysophosphatidylserine (LPS), and lysophosphatidylglycerol (LPG). It acts by transphosphatidylation, releasing exclusively cyclic phosphate products as second products. Induces dermonecrosis, hemolysis, increased vascular permeability, edema, inflammatory response, and platelet aggregation. The chain is Dermonecrotic toxin LlSicTox-alphaIV3 from Loxosceles laeta (South American recluse spider).